A 434-amino-acid polypeptide reads, in one-letter code: Protein TolB homolog (434 aa).

A signal peptide spans 1–27 (MRSTRNSFACLCIMLFGMLFVPFTLRA). A disordered region spans residues 413–434 (SNQRPLLNMQGEQQQPSWSVSK).

Belongs to the TolB family.

It is found in the periplasm. The polypeptide is Protein TolB homolog (Chlorobaculum tepidum (strain ATCC 49652 / DSM 12025 / NBRC 103806 / TLS) (Chlorobium tepidum)).